The following is a 486-amino-acid chain: Cardiolipin synthase A (486 aa).

Helical transmembrane passes span threonine 3–valine 23 and methionine 38–phenylalanine 58. 2 consecutive PLD phosphodiesterase domains span residues methionine 219–arginine 246 and glutamate 399–serine 426. Catalysis depends on residues histidine 224, lysine 226, aspartate 231, histidine 404, lysine 406, and aspartate 411.

This sequence belongs to the phospholipase D family. Cardiolipin synthase subfamily. ClsA sub-subfamily.

The protein localises to the cell inner membrane. It catalyses the reaction 2 a 1,2-diacyl-sn-glycero-3-phospho-(1'-sn-glycerol) = a cardiolipin + glycerol. Functionally, catalyzes the reversible phosphatidyl group transfer from one phosphatidylglycerol molecule to another to form cardiolipin (CL) (diphosphatidylglycerol) and glycerol. The sequence is that of Cardiolipin synthase A from Yersinia pseudotuberculosis serotype O:1b (strain IP 31758).